A 611-amino-acid chain; its full sequence is Dihydroxy-acid dehydratase (611 aa).

Residue Asp82 participates in Mg(2+) binding. Cys123 serves as a coordination point for [2Fe-2S] cluster. 2 residues coordinate Mg(2+): Asp124 and Lys125. Lys125 carries the N6-carboxylysine modification. Cys192 is a [2Fe-2S] cluster binding site. Glu489 is a binding site for Mg(2+). Ser515 (proton acceptor) is an active-site residue. Residues 565–574 (ERRKAEEARG) show a composition bias toward basic and acidic residues. A disordered region spans residues 565-586 (ERRKAEEARGKKAFTPPTRQRE).

It belongs to the IlvD/Edd family. In terms of assembly, homodimer. It depends on [2Fe-2S] cluster as a cofactor. Mg(2+) serves as cofactor.

The enzyme catalyses (2R)-2,3-dihydroxy-3-methylbutanoate = 3-methyl-2-oxobutanoate + H2O. The catalysed reaction is (2R,3R)-2,3-dihydroxy-3-methylpentanoate = (S)-3-methyl-2-oxopentanoate + H2O. It participates in amino-acid biosynthesis; L-isoleucine biosynthesis; L-isoleucine from 2-oxobutanoate: step 3/4. It functions in the pathway amino-acid biosynthesis; L-valine biosynthesis; L-valine from pyruvate: step 3/4. Functions in the biosynthesis of branched-chain amino acids. Catalyzes the dehydration of (2R,3R)-2,3-dihydroxy-3-methylpentanoate (2,3-dihydroxy-3-methylvalerate) into 2-oxo-3-methylpentanoate (2-oxo-3-methylvalerate) and of (2R)-2,3-dihydroxy-3-methylbutanoate (2,3-dihydroxyisovalerate) into 2-oxo-3-methylbutanoate (2-oxoisovalerate), the penultimate precursor to L-isoleucine and L-valine, respectively. The sequence is that of Dihydroxy-acid dehydratase from Parabacteroides distasonis (strain ATCC 8503 / DSM 20701 / CIP 104284 / JCM 5825 / NCTC 11152).